A 418-amino-acid chain; its full sequence is Tyrosine--tRNA ligase 1 (418 aa).

Tyrosine 34 is an L-tyrosine binding site. Residues proline 39–histidine 48 carry the 'HIGH' region motif. The L-tyrosine site is built by tyrosine 169 and glutamine 173. The 'KMSKS' region motif lies at lysine 229–serine 233. Residue lysine 232 participates in ATP binding. Residues leucine 352 to tyrosine 418 form the S4 RNA-binding domain.

This sequence belongs to the class-I aminoacyl-tRNA synthetase family. TyrS type 1 subfamily. Homodimer.

The protein resides in the cytoplasm. The enzyme catalyses tRNA(Tyr) + L-tyrosine + ATP = L-tyrosyl-tRNA(Tyr) + AMP + diphosphate + H(+). In terms of biological role, catalyzes the attachment of tyrosine to tRNA(Tyr) in a two-step reaction: tyrosine is first activated by ATP to form Tyr-AMP and then transferred to the acceptor end of tRNA(Tyr). This Streptococcus thermophilus (strain CNRZ 1066) protein is Tyrosine--tRNA ligase 1.